A 750-amino-acid polypeptide reads, in one-letter code: MIIRSPEPEVKILVDRDHIKTSFEEWARPGHFSRTIAKGPDTTTWIWNLHADAHDFDSHTSDLEEISRKVFSAHFGQLSIIFLWLSGMYFHGARFSNYEAWLSDPTHIGPSAQVVWPIVGQEILNGDVGGGFRGIQITSGFFQIWRASGITSELQLYCTAIGALVFAALMLFAGWFHYHKAAPKLAWFQDVESMLNHHLAGLLGLGSLSWAGHQVHVSLPINQFLNAGVDPKEIPLPHEFILNRELLAQLYPSFAEGATPFFTLNWSKYAEFLSFHGGLDPVTGGLWLTDIAHHHLAIAILFLIAGHMYRTNWGIGHGLKDILEAHKGPFTGQGHKGLYEILTTSWHAQLSLNLAMLGSLTIVVAHHMYSMPPYPYLATDYGTQLSLFTHHMWIGGFLIVGAAAHAAIFMVRDYDPTTRYNDLLDRVLRHRDAIISHLNWACIFLGFHSFGLYIHNDTMSALGRPQDMFSDTAIQLQPVFAQWIQNTHALAPGATAPGATASTSLTWGGGDLVAVGGKVALLPIPLGTADFLVHHIHAFTIHVTVLILLKGVLFARSSRLIPDKANLGFRFPCDGPGRGGTCQVSAWDHVFLGLFWMYNSISVVIFHFSWKMQSDVWGSLSDQGVVTHITGGNFAQSSITINGWLRDFLWAQASQVIQSYGSSLSAYGLFFLGAHFVWAFSLMFLFSGRGYWQELIESIVWAHNKLKVAPATQPRALSIVQGRAVGVTHYLLGGIATTWAFFLARIIAVG.

Helical transmembrane passes span 70 to 93 (VFSA…FHGA), 156 to 179 (LYCT…FHYH), 195 to 219 (LNHH…HVSL), 291 to 309 (IAHH…GHMY), 346 to 369 (WHAQ…HHMY), 385 to 411 (LSLF…IFMV), 433 to 455 (AIIS…LYIH), and 531 to 549 (FLVH…LILL). The [4Fe-4S] cluster site is built by Cys573 and Cys582. A run of 2 helical transmembrane segments spans residues 589 to 610 (HVFL…HFSW) and 664 to 686 (LSAY…MFLF). His675 provides a ligand contact to chlorophyll a'. Chlorophyll a-binding residues include Met683 and Tyr691. A phylloquinone-binding site is contributed by Trp692. The chain crosses the membrane as a helical span at residues 724 to 744 (AVGVTHYLLGGIATTWAFFLA).

Belongs to the PsaA/PsaB family. As to quaternary structure, the PsaA/B heterodimer binds the P700 chlorophyll special pair and subsequent electron acceptors. PSI consists of a core antenna complex that captures photons, and an electron transfer chain that converts photonic excitation into a charge separation. The eukaryotic PSI reaction center is composed of at least 11 subunits. The cofactor is P700 is a chlorophyll a/chlorophyll a' dimer, A0 is one or more chlorophyll a, A1 is one or both phylloquinones and FX is a shared 4Fe-4S iron-sulfur center..

The protein localises to the plastid. Its subcellular location is the chloroplast thylakoid membrane. It catalyses the reaction reduced [plastocyanin] + hnu + oxidized [2Fe-2S]-[ferredoxin] = oxidized [plastocyanin] + reduced [2Fe-2S]-[ferredoxin]. PsaA and PsaB bind P700, the primary electron donor of photosystem I (PSI), as well as the electron acceptors A0, A1 and FX. PSI is a plastocyanin-ferredoxin oxidoreductase, converting photonic excitation into a charge separation, which transfers an electron from the donor P700 chlorophyll pair to the spectroscopically characterized acceptors A0, A1, FX, FA and FB in turn. Oxidized P700 is reduced on the lumenal side of the thylakoid membrane by plastocyanin. The sequence is that of Photosystem I P700 chlorophyll a apoprotein A1 from Jasminum nudiflorum (Winter jasmine).